Reading from the N-terminus, the 351-residue chain is Prostaglandin reductase 2 (351 aa).

99 to 100 (FY) is a binding site for substrate. Residues 165-168 (GACG), Lys192, Tyr208, Asn231, 253-259 (CGQISQY), 287-289 (FLV), and Asn337 each bind NADP(+). Residue 288-290 (LVL) coordinates substrate.

Belongs to the NADP-dependent oxidoreductase L4BD family. In terms of assembly, monomer.

The protein resides in the cytoplasm. It catalyses the reaction 13,14-dihydro-15-oxo-prostaglandin E2 + NAD(+) = 15-oxoprostaglandin E2 + NADH + H(+). The catalysed reaction is 13,14-dihydro-15-oxo-prostaglandin E2 + NADP(+) = 15-oxoprostaglandin E2 + NADPH + H(+). It carries out the reaction 13,14-dihydro-15-oxo-PGF2alpha + NADP(+) = 15-oxoprostaglandin F2alpha + NADPH + H(+). The enzyme catalyses 13,14-dihydro-15-oxo-prostaglandin E1 + NADP(+) = 15-oxoprostaglandin E1 + NADPH + H(+). It catalyses the reaction 13,14-dihydro-15-oxo-prostaglandin F1alpha + NADP(+) = 15-oxoprostaglandin F1alpha + NADPH + H(+). In terms of biological role, functions as 15-oxo-prostaglandin 13-reductase and acts on 15-keto-PGE1, 15-keto-PGE2, 15-keto-PGE1-alpha and 15-keto-PGE2-alpha with highest activity towards 15-keto-PGE2. Overexpression represses transcriptional activity of PPARG and inhibits adipocyte differentiation. This Pongo abelii (Sumatran orangutan) protein is Prostaglandin reductase 2 (PTGR2).